The sequence spans 282 residues: Nucleotide-binding protein Ping_2894 (282 aa).

8–15 (GRSGSGKT) provides a ligand contact to ATP. 56 to 59 (DIRN) serves as a coordination point for GTP.

It belongs to the RapZ-like family.

Displays ATPase and GTPase activities. This is Nucleotide-binding protein Ping_2894 from Psychromonas ingrahamii (strain DSM 17664 / CCUG 51855 / 37).